A 335-amino-acid polypeptide reads, in one-letter code: 3-ketodihydrosphingosine reductase TSC10 (335 aa).

Residues Gly-42, Ser-44, Ser-45, and Gly-46 each coordinate NADPH. The short motif at Gly-42–Gly-46 is the GXSXG element. Leu-47 serves as a coordination point for NADP(+). NADPH is bound by residues Arg-67, Asp-68, Lys-71, Asp-95, and Leu-96. Residue Asp-95 coordinates NADP(+). NADP(+) is bound by residues Tyr-190, Lys-194, and Ile-223. The active-site Proton acceptor is Tyr-190. Lys-194 serves as the catalytic Lowers pKa of active site Tyr. A helical transmembrane segment spans residues Thr-288–Trp-308.

Belongs to the short-chain dehydrogenases/reductases (SDR) family.

It is found in the endoplasmic reticulum membrane. It carries out the reaction sphinganine + NADP(+) = 3-oxosphinganine + NADPH + H(+). It participates in lipid metabolism; sphingolipid metabolism. In terms of biological role, catalyzes the reduction of 3'-oxosphinganine (3-ketodihydrosphingosine/KDS) to sphinganine (dihydrosphingosine/DHS), the second step of de novo sphingolipid biosynthesis. This Cryptococcus neoformans var. neoformans serotype D (strain B-3501A) (Filobasidiella neoformans) protein is 3-ketodihydrosphingosine reductase TSC10 (TSC10).